A 243-amino-acid polypeptide reads, in one-letter code: 4-phosphopantoate--beta-alanine ligase (243 aa).

ATP-binding positions include Arg-15, Arg-37, 176–178 (DLN), and 182–183 (RT).

Belongs to the archaeal phosphopantothenate synthetase family. Homodimer.

The catalysed reaction is (R)-4-phosphopantoate + beta-alanine + ATP = (R)-4'-phosphopantothenate + AMP + diphosphate + H(+). It functions in the pathway cofactor biosynthesis; coenzyme A biosynthesis. Its function is as follows. Catalyzes the condensation of (R)-4-phosphopantoate and beta-alanine to 4'-phosphopantothenate in the CoA biosynthesis pathway. In Methanospirillum hungatei JF-1 (strain ATCC 27890 / DSM 864 / NBRC 100397 / JF-1), this protein is 4-phosphopantoate--beta-alanine ligase.